A 332-amino-acid polypeptide reads, in one-letter code: Probable sugar phosphate/phosphate translocator At1g53660 (332 aa).

10 consecutive transmembrane segments (helical) span residues A19–L39, F46–L66, L82–L102, A120–C140, L143–I163, W165–M185, L199–F219, L233–I253, L259–A281, and L285–N304. Over residues E312–K322 the composition is skewed to polar residues. The disordered stretch occupies residues E312 to L332. Positions N323–L332 are enriched in basic and acidic residues.

Belongs to the TPT transporter family. TPT (TC 2.A.7.9) subfamily.

Its subcellular location is the membrane. In Arabidopsis thaliana (Mouse-ear cress), this protein is Probable sugar phosphate/phosphate translocator At1g53660.